Reading from the N-terminus, the 84-residue chain is Cell division topological specificity factor (84 aa).

This sequence belongs to the MinE family.

In terms of biological role, prevents the cell division inhibition by proteins MinC and MinD at internal division sites while permitting inhibition at polar sites. This ensures cell division at the proper site by restricting the formation of a division septum at the midpoint of the long axis of the cell. This Cupriavidus necator (strain ATCC 17699 / DSM 428 / KCTC 22496 / NCIMB 10442 / H16 / Stanier 337) (Ralstonia eutropha) protein is Cell division topological specificity factor.